Here is a 732-residue protein sequence, read N- to C-terminus: E3 ubiquitin-protein ligase TRIM56 (732 aa).

The RING-type zinc-finger motif lies at 21–60 (CKICLEQLRVPKTLPCLHTYCQDCLAQLAEGSRLRCPECR). The segment at 164–205 (RQAAQCPQHPGEALRFLCQPCSQLLCRECRLDPHLDHPCLPL) adopts a B box-type zinc-finger fold. C169, H172, C192, and H197 together coordinate Zn(2+). Residues 211–286 (ARRPGLEELL…LRAHVEAAEE (76 aa)) are a coiled coil. Residues 374 to 384 (LPQKDSGKDGA) show a composition bias toward basic and acidic residues. The interval 374–462 (LPQKDSGKDG…PAPGPNLEGS (89 aa)) is disordered. Positions 389 to 405 (GDATQPQSRDGVQTPNQ) are enriched in polar residues. Position 402 is a phosphothreonine (T402). The span at 407–416 (DGAKTPKESR) shows a compositional bias: basic and acidic residues. T419 bears the Phosphothreonine mark. Basic residues predominate over residues 434–446 (SNKKRKFKGRLKS). Position 452 is a phosphoserine (S452).

It belongs to the TRIM/RBCC family. Interacts with STING1. Interacts with TICAM1.

It localises to the cytoplasm. The enzyme catalyses S-ubiquitinyl-[E2 ubiquitin-conjugating enzyme]-L-cysteine + [acceptor protein]-L-lysine = [E2 ubiquitin-conjugating enzyme]-L-cysteine + N(6)-ubiquitinyl-[acceptor protein]-L-lysine.. It functions in the pathway protein modification; protein ubiquitination. E3 ubiquitin-protein ligase that plays a key role in innate antiviral immunity by mediating ubiquitination of CGAS and STING1. In response to pathogen- and host-derived double-stranded DNA (dsDNA), targets STING1 to 'Lys-63'-linked ubiquitination, thereby promoting its homodimerization, a step required for the production of type I interferon IFN-beta. Also mediate monoubiquitination of CGAS, thereby promoting CGAS oligomerization and subsequent activation. Independently of its E3 ubiquitin ligase activity, positive regulator of TLR3 signaling. Potentiates extracellular double stranded RNA (dsRNA)-induced expression of IFNB1 and interferon-stimulated genes ISG15, IFIT1/ISG56, CXCL10, OASL and CCL5/RANTES. Restricts bovine viral diarrhea virus (BVDV) replication. In Bos taurus (Bovine), this protein is E3 ubiquitin-protein ligase TRIM56.